A 208-amino-acid polypeptide reads, in one-letter code: Small ribosomal subunit protein eS8 (208 aa).

Residues Met1–Tyr27 form a disordered region. A compositionally biased stretch (basic residues) spans Trp8–Lys26.

This sequence belongs to the eukaryotic ribosomal protein eS8 family. In terms of assembly, component of the small ribosomal subunit. Identified in a IGF2BP1-dependent mRNP granule complex containing untranslated mRNAs. Part of the small subunit (SSU) processome, composed of more than 70 proteins and the RNA chaperone small nucleolar RNA (snoRNA) U3.

The protein localises to the cytoplasm. It is found in the membrane. It localises to the nucleus. The protein resides in the nucleolus. In terms of biological role, component of the small ribosomal subunit. The ribosome is a large ribonucleoprotein complex responsible for the synthesis of proteins in the cell. Part of the small subunit (SSU) processome, first precursor of the small eukaryotic ribosomal subunit. During the assembly of the SSU processome in the nucleolus, many ribosome biogenesis factors, an RNA chaperone and ribosomal proteins associate with the nascent pre-rRNA and work in concert to generate RNA folding, modifications, rearrangements and cleavage as well as targeted degradation of pre-ribosomal RNA by the RNA exosome. This chain is Small ribosomal subunit protein eS8 (rps8), found in Danio rerio (Zebrafish).